The sequence spans 429 residues: Probable exoglucanase GH6D (429 aa).

The N-terminal stretch at 1–17 is a signal peptide; it reads MRAVYAILAGLLATGSA. Trp-75 and Ser-77 together coordinate substrate. Catalysis depends on proton donor residues Asp-115 and Asp-162. Residues Asn-206 and Trp-209 each coordinate substrate. Asn-237 carries N-linked (GlcNAc...) asparagine glycosylation. The substrate site is built by Asn-240, Trp-300, Lys-328, and Glu-332. A disordered region spans residues 240 to 261; it reads NYNPYSTNNPPPYTAGSPSADE. The interval 362 to 390 is disordered; the sequence is PEIRADGGGGGSPAPGPSSTAVAPSPSAT. The segment covering 378 to 390 has biased composition (low complexity); that stretch reads PSSTAVAPSPSAT. Residues 394 to 429 form the CBM1 domain; that stretch reads NCAARWAQCGGQGWTGPTCCAQGTCQASNQWYSQCL.

It belongs to the glycosyl hydrolase 6 (cellulase B) family.

The protein resides in the secreted. In terms of biological role, probable exoglucanase that may play an important function in biomass degradation by catalyzing the hydrolysis of cellulose. The protein is Probable exoglucanase GH6D of Podospora anserina (strain S / ATCC MYA-4624 / DSM 980 / FGSC 10383) (Pleurage anserina).